The following is a 260-amino-acid chain: Putative protein phosphatase (260 aa).

Residues 9–254 (FTGLSKKGPV…DNITAALVNL (246 aa)) form the PPM-type phosphatase domain.

It catalyses the reaction O-phospho-L-seryl-[protein] + H2O = L-seryl-[protein] + phosphate. The catalysed reaction is O-phospho-L-threonyl-[protein] + H2O = L-threonyl-[protein] + phosphate. This chain is Putative protein phosphatase, found in Mycoplasma genitalium (strain ATCC 33530 / DSM 19775 / NCTC 10195 / G37) (Mycoplasmoides genitalium).